We begin with the raw amino-acid sequence, 473 residues long: Photosystem II CP43 reaction center protein (473 aa).

Residues 1–14 constitute a propeptide that is removed on maturation; the sequence is MKILYSQRRFYPVE. Thr-15 bears the N-acetylthreonine mark. Thr-15 is subject to Phosphothreonine. 5 helical membrane-spanning segments follow: residues 69 to 93, 134 to 155, 178 to 200, 255 to 275, and 291 to 312; these read LFEV…PHLA, LIGP…KDKN, KALY…RKIT, KPFA…LSYS, and WFNN…ASQA. Position 367 (Glu-367) interacts with [CaMn4O5] cluster. A helical membrane pass occupies residues 447-471; that stretch reads RARAAAAGFEKGIDRDFEPVLSMTP.

This sequence belongs to the PsbB/PsbC family. PsbC subfamily. As to quaternary structure, PSII is composed of 1 copy each of membrane proteins PsbA, PsbB, PsbC, PsbD, PsbE, PsbF, PsbH, PsbI, PsbJ, PsbK, PsbL, PsbM, PsbT, PsbX, PsbY, PsbZ, Psb30/Ycf12, at least 3 peripheral proteins of the oxygen-evolving complex and a large number of cofactors. It forms dimeric complexes. Requires Binds multiple chlorophylls and provides some of the ligands for the Ca-4Mn-5O cluster of the oxygen-evolving complex. It may also provide a ligand for a Cl- that is required for oxygen evolution. PSII binds additional chlorophylls, carotenoids and specific lipids. as cofactor. Post-translationally, phosphorylated on threonine residue(s).

It localises to the plastid. Its subcellular location is the chloroplast thylakoid membrane. One of the components of the core complex of photosystem II (PSII). It binds chlorophyll and helps catalyze the primary light-induced photochemical processes of PSII. PSII is a light-driven water:plastoquinone oxidoreductase, using light energy to abstract electrons from H(2)O, generating O(2) and a proton gradient subsequently used for ATP formation. This Marchantia polymorpha (Common liverwort) protein is Photosystem II CP43 reaction center protein.